The sequence spans 54 residues: Large ribosomal subunit protein bL33 (54 aa).

Belongs to the bacterial ribosomal protein bL33 family.

The sequence is that of Large ribosomal subunit protein bL33 from Opitutus terrae (strain DSM 11246 / JCM 15787 / PB90-1).